A 1528-amino-acid polypeptide reads, in one-letter code: Mitogen-activated protein kinase kinae kinase MCK1 (1528 aa).

Low complexity predominate over residues 1-11 (MYPGSSQSRPY). Disordered stretches follow at residues 1 to 84 (MYPG…PAPR), 109 to 208 (ATAP…VPGI), 303 to 418 (VHAR…NNVR), 449 to 481 (INGRGARQSPSDLGDNSAGTDSPVSARDTKLPF), 607 to 652 (VKPP…EARL), 695 to 731 (GKPVDFDTPRHSPYEDKNTDRMFPTRNAPAPPVAPSA), 746 to 786 (VQGS…SQPM), 811 to 929 (SANN…SDDG), 943 to 1012 (KKAK…EDGK), and 1086 to 1191 (ATPL…ALLR). Residues 12-21 (QVPPPPPMSP) are compositionally biased toward pro residues. Low complexity predominate over residues 22-31 (PLSQMHQQMS). Pro residues predominate over residues 53–64 (APPPPPPGPPPA). Residues 157–173 (SSQTWQTTSSSSTNTAS) are compositionally biased toward low complexity. Composition is skewed to polar residues over residues 174–183 (VNDNVQSNAP), 191–205 (NNSASITGTQSSSNV), and 318–327 (HGRQGSINSR). The segment covering 328 to 337 (GNDKGTHDGS) has biased composition (basic and acidic residues). Residues 338–363 (DSPNTPSSQSRSTTIPTFPDGSSFSN) show a composition bias toward polar residues. Low complexity predominate over residues 396-408 (SSTPKSSTLSVSP). Positions 409 to 418 (HSSRFGNNVR) are enriched in polar residues. Polar residues-rich tracts occupy residues 613–622 (SQQSTWSAGD) and 630–641 (GTSSSMSRQQNT). Composition is skewed to basic and acidic residues over residues 642 to 652 (LKDDQSEEARL) and 698 to 714 (VDFDTPRHSPYEDKNTD). Residues 846 to 860 (RSQTAGDLSPISQMP) are compositionally biased toward polar residues. The span at 917-928 (QSDDDSGDDSDD) shows a compositional bias: acidic residues. Residues 977 to 986 (VSFNSPQSAR) are compositionally biased toward polar residues. Basic and acidic residues predominate over residues 1001-1012 (PKSDMWDSEDGK). Over residues 1086 to 1111 (ATPLNSLPPSRVQSMYNESDTLGSDE) the composition is skewed to polar residues. Residues 1142–1152 (SIREKARGAHE) are compositionally biased toward basic and acidic residues. The segment covering 1158–1188 (TQTSMAAPQGLSRSGGTPATETQPTQNNSSA) has biased composition (polar residues). The region spanning 1238–1507 (WFKGQLIGKG…NKLLSQHPFC (270 aa)) is the Protein kinase domain. ATP-binding positions include 1244-1252 (IGKGTYGRV) and K1267.

This sequence belongs to the protein kinase superfamily. STE Ser/Thr protein kinase family. MAP kinase kinase kinase subfamily. Interacts with the adapter protein MST50 and MIP11.

The enzyme catalyses L-seryl-[protein] + ATP = O-phospho-L-seryl-[protein] + ADP + H(+). It carries out the reaction L-threonyl-[protein] + ATP = O-phospho-L-threonyl-[protein] + ADP + H(+). In terms of biological role, mitogen-activated protein kinase kinase kinase; part of the MCK1-MKK2-MPS1 MAP kinase (MAPK) signal transduction cascade that is essential for appressorium formation, penetration and invasive growth. Beside its role in pathogenesis, the MPS1 cascade is active in conidiation and cellular stress responses. Targets downstream of the the MPS1-MAPK pathway include transcription factors MIG1 and SWI6, as well as GSK1 and MPG1. This Pyricularia oryzae (strain 70-15 / ATCC MYA-4617 / FGSC 8958) (Rice blast fungus) protein is Mitogen-activated protein kinase kinae kinase MCK1.